A 473-amino-acid polypeptide reads, in one-letter code: Cardiolipin synthase C (473 aa).

PLD phosphodiesterase domains follow at residues 125–152 (LNRRMHNKSFTVDGVVTLVGGRNIGDAY) and 364–391 (SGASLHAKTFSIDGKTVFIGSFNFDPRS). Catalysis depends on residues His-130, Lys-132, Asp-137, His-369, Lys-371, and Asp-376.

It belongs to the phospholipase D family. Cardiolipin synthase subfamily. ClsC sub-subfamily.

It carries out the reaction a 1,2-diacyl-sn-glycero-3-phospho-(1'-sn-glycerol) + a 1,2-diacyl-sn-glycero-3-phosphoethanolamine = a cardiolipin + ethanolamine. Full activity requires coexpression with the neighboring gene ymdB. Its function is as follows. Catalyzes the synthesis of cardiolipin (CL) (diphosphatidylglycerol) from phosphatidylglycerol (PG) and phosphatidylethanolamine (PE). This is Cardiolipin synthase C from Escherichia coli (strain K12).